The chain runs to 146 residues: MKLHELKPAEGSRKVRNRVGRGAATGNGKTSGRGQKGQKARSGGSVRPGFEGGQLPLFRRLPKRGFTNINRKEYAIVNLDQLNKFEDGTEVTPALLVESGVVKSEKSGIKILGTGSLDKKLTVKASKFSASAAEAIDAKGGAHEVI.

Basic and acidic residues predominate over residues 1–13 (MKLHELKPAEGSR). The segment at 1 to 56 (MKLHELKPAEGSRKVRNRVGRGAATGNGKTSGRGQKGQKARSGGSVRPGFEGGQLP) is disordered. Positions 23–35 (AATGNGKTSGRGQ) are enriched in gly residues.

This sequence belongs to the universal ribosomal protein uL15 family. Part of the 50S ribosomal subunit.

Its function is as follows. Binds to the 23S rRNA. This is Large ribosomal subunit protein uL15 from Staphylococcus saprophyticus subsp. saprophyticus (strain ATCC 15305 / DSM 20229 / NCIMB 8711 / NCTC 7292 / S-41).